We begin with the raw amino-acid sequence, 131 residues long: Transcription antitermination protein NusB (131 aa).

The protein belongs to the NusB family.

In terms of biological role, involved in transcription antitermination. Required for transcription of ribosomal RNA (rRNA) genes. Binds specifically to the boxA antiterminator sequence of the ribosomal RNA (rrn) operons. In Caldicellulosiruptor saccharolyticus (strain ATCC 43494 / DSM 8903 / Tp8T 6331), this protein is Transcription antitermination protein NusB.